Here is a 149-residue protein sequence, read N- to C-terminus: D-aminoacyl-tRNA deacylase (149 aa).

The Gly-cisPro motif, important for rejection of L-amino acids motif lies at 137–138 (GP).

This sequence belongs to the DTD family. Homodimer.

The protein localises to the cytoplasm. The enzyme catalyses glycyl-tRNA(Ala) + H2O = tRNA(Ala) + glycine + H(+). It catalyses the reaction a D-aminoacyl-tRNA + H2O = a tRNA + a D-alpha-amino acid + H(+). Its function is as follows. An aminoacyl-tRNA editing enzyme that deacylates mischarged D-aminoacyl-tRNAs. Also deacylates mischarged glycyl-tRNA(Ala), protecting cells against glycine mischarging by AlaRS. Acts via tRNA-based rather than protein-based catalysis; rejects L-amino acids rather than detecting D-amino acids in the active site. By recycling D-aminoacyl-tRNA to D-amino acids and free tRNA molecules, this enzyme counteracts the toxicity associated with the formation of D-aminoacyl-tRNA entities in vivo and helps enforce protein L-homochirality. The sequence is that of D-aminoacyl-tRNA deacylase from Herminiimonas arsenicoxydans.